A 306-amino-acid chain; its full sequence is Putative HTH-type transcriptional regulatory protein Mhun_2548 (306 aa).

Positions L132–I189 constitute an HTH cro/C1-type domain. Residues L143–A162 constitute a DNA-binding region (H-T-H motif).

This Methanospirillum hungatei JF-1 (strain ATCC 27890 / DSM 864 / NBRC 100397 / JF-1) protein is Putative HTH-type transcriptional regulatory protein Mhun_2548.